The chain runs to 134 residues: Large ribosomal subunit protein uL16c (134 aa).

The tract at residues methionine 1–histidine 22 is disordered.

This sequence belongs to the universal ribosomal protein uL16 family. As to quaternary structure, part of the 50S ribosomal subunit.

It localises to the plastid. The protein localises to the chloroplast. This Nicotiana tomentosiformis (Tobacco) protein is Large ribosomal subunit protein uL16c.